The sequence spans 375 residues: Xylose transport system permease protein XylH (375 aa).

10 helical membrane-spanning segments follow: residues Leu-9 to Thr-29, Leu-52 to Leu-72, Val-85 to Phe-105, Val-118 to Leu-138, Leu-159 to Gly-179, Asp-199 to Asp-219, Tyr-220 to Leu-240, Lys-271 to Ala-291, Leu-319 to Leu-339, and Val-348 to Asp-368.

The protein belongs to the binding-protein-dependent transport system permease family. AraH/RbsC subfamily.

The protein localises to the cell inner membrane. Part of the binding-protein-dependent transport system for D-xylose. Probably responsible for the translocation of the substrate across the membrane. The chain is Xylose transport system permease protein XylH (xylH) from Haemophilus influenzae (strain ATCC 51907 / DSM 11121 / KW20 / Rd).